The primary structure comprises 347 residues: Ribosomal RNA small subunit methyltransferase C (347 aa).

Belongs to the methyltransferase superfamily. RsmC family. In terms of assembly, monomer.

Its subcellular location is the cytoplasm. It carries out the reaction guanosine(1207) in 16S rRNA + S-adenosyl-L-methionine = N(2)-methylguanosine(1207) in 16S rRNA + S-adenosyl-L-homocysteine + H(+). In terms of biological role, specifically methylates the guanine in position 1207 of 16S rRNA in the 30S particle. The chain is Ribosomal RNA small subunit methyltransferase C from Yersinia pseudotuberculosis serotype O:1b (strain IP 31758).